The sequence spans 483 residues: V-type proton ATPase subunit H (483 aa).

S483 carries the phosphoserine modification.

The protein belongs to the V-ATPase H subunit family. In terms of assembly, V-ATPase is a heteromultimeric enzyme made up of two complexes: the ATP-hydrolytic V1 complex and the proton translocation V0 complex. The V1 complex consists of three catalytic AB heterodimers that form a heterohexamer, three peripheral stalks each consisting of EG heterodimers, one central rotor including subunits D and F, and the regulatory subunits C and H. The proton translocation complex V0 consists of the proton transport subunit a, a ring of proteolipid subunits c9c'', rotary subunit d, subunits e and f, and the accessory subunits ATP6AP1/Ac45 and ATP6AP2/PRR. Interacts with AP2M1. Interacts with TM9SF4 in colon cancer cells. As to quaternary structure, (Microbial infection) Interacts with HIV-1 Nef protein. (Microbial infection) Interacts with M.tuberculosis PtpA, which blocks V-ATPase trafficking and phagosome acidification. Widely expressed.

The protein localises to the cytoplasmic vesicle. It is found in the clathrin-coated vesicle membrane. Functionally, subunit of the V1 complex of vacuolar(H+)-ATPase (V-ATPase), a multisubunit enzyme composed of a peripheral complex (V1) that hydrolyzes ATP and a membrane integral complex (V0) that translocates protons. V-ATPase is responsible for acidifying and maintaining the pH of intracellular compartments and in some cell types, is targeted to the plasma membrane, where it is responsible for acidifying the extracellular environment. Subunit H is essential for V-ATPase activity, but not for the assembly of the complex. Involved in the endocytosis mediated by clathrin-coated pits, required for the formation of endosomes. This chain is V-type proton ATPase subunit H (ATP6V1H), found in Homo sapiens (Human).